The chain runs to 239 residues: Ribonuclease PH (239 aa).

Phosphate contacts are provided by residues Arg86 and 124 to 126 (GTR).

The protein belongs to the RNase PH family. As to quaternary structure, homohexameric ring arranged as a trimer of dimers.

It carries out the reaction tRNA(n+1) + phosphate = tRNA(n) + a ribonucleoside 5'-diphosphate. Its function is as follows. Phosphorolytic 3'-5' exoribonuclease that plays an important role in tRNA 3'-end maturation. Removes nucleotide residues following the 3'-CCA terminus of tRNAs; can also add nucleotides to the ends of RNA molecules by using nucleoside diphosphates as substrates, but this may not be physiologically important. Probably plays a role in initiation of 16S rRNA degradation (leading to ribosome degradation) during starvation. This Anaeromyxobacter dehalogenans (strain 2CP-C) protein is Ribonuclease PH.